Here is a 429-residue protein sequence, read N- to C-terminus: 3-phosphoshikimate 1-carboxyvinyltransferase (429 aa).

Residues Lys-11, Ser-12, and Arg-16 each contribute to the 3-phosphoshikimate site. Lys-11 lines the phosphoenolpyruvate pocket. Residues Gly-82 and Arg-110 each contribute to the phosphoenolpyruvate site. 3-phosphoshikimate-binding residues include Ser-155, Gln-157, Asp-302, and Lys-329. Gln-157 contacts phosphoenolpyruvate. Residue Asp-302 is the Proton acceptor of the active site. Phosphoenolpyruvate contacts are provided by Arg-333 and Arg-385.

It belongs to the EPSP synthase family. As to quaternary structure, monomer.

The protein localises to the cytoplasm. It catalyses the reaction 3-phosphoshikimate + phosphoenolpyruvate = 5-O-(1-carboxyvinyl)-3-phosphoshikimate + phosphate. It participates in metabolic intermediate biosynthesis; chorismate biosynthesis; chorismate from D-erythrose 4-phosphate and phosphoenolpyruvate: step 6/7. Catalyzes the transfer of the enolpyruvyl moiety of phosphoenolpyruvate (PEP) to the 5-hydroxyl of shikimate-3-phosphate (S3P) to produce enolpyruvyl shikimate-3-phosphate and inorganic phosphate. In Helicobacter pylori (strain ATCC 700392 / 26695) (Campylobacter pylori), this protein is 3-phosphoshikimate 1-carboxyvinyltransferase.